The following is a 776-amino-acid chain: Homoaconitase, mitochondrial (776 aa).

Residues 1 to 24 (MVALRRAVALNAVAIARLQTRALT) constitute a mitochondrion transit peptide. 3 residues coordinate [4Fe-4S] cluster: Cys392, Cys459, and Cys462.

Belongs to the aconitase/IPM isomerase family. Requires [4Fe-4S] cluster as cofactor.

It localises to the mitochondrion. The catalysed reaction is (2R,3S)-homoisocitrate = cis-homoaconitate + H2O. The protein operates within amino-acid biosynthesis; L-lysine biosynthesis via AAA pathway; L-alpha-aminoadipate from 2-oxoglutarate: step 3/5. Catalyzes the reversible hydration of cis-homoaconitate to (2R,3S)-homoisocitrate, a step in the alpha-aminoadipate pathway for lysine biosynthesis. The sequence is that of Homoaconitase, mitochondrial (LYS4) from Gibberella zeae (strain ATCC MYA-4620 / CBS 123657 / FGSC 9075 / NRRL 31084 / PH-1) (Wheat head blight fungus).